Here is a 294-residue protein sequence, read N- to C-terminus: MSEVKVSAKMVKELRDRTGLGMMECKKALEESNGDVETAIDNLRKSGQAKAAKKAGNIAADGAIIIAQGDSKAFLLEVNCQTDFVAKDENFAAFAETVANLALENNVTDVAAIAELPYGNGQTVEEARVSLVQKIGENIQIRRVEVLEGANIAAYRHGLRIGVVVSYEGGSAETGKNLAMHIAAFNPVAVADEDVAADLLAREKDIIEAKARESGKPDNIVEKMIEGGLRKYLEEVTLLRQPYVMDNEKKVGDVLKAEGVKVLGFKRLEVGEGIEKKQEDFAAEVAATQALANK.

The interval 82 to 85 is involved in Mg(2+) ion dislocation from EF-Tu; sequence TDFV.

The protein belongs to the EF-Ts family.

Its subcellular location is the cytoplasm. Associates with the EF-Tu.GDP complex and induces the exchange of GDP to GTP. It remains bound to the aminoacyl-tRNA.EF-Tu.GTP complex up to the GTP hydrolysis stage on the ribosome. The polypeptide is Elongation factor Ts (Psychrobacter cryohalolentis (strain ATCC BAA-1226 / DSM 17306 / VKM B-2378 / K5)).